Here is a 158-residue protein sequence, read N- to C-terminus: MDHDHMHDMPPPSPSSSSMSNHTTPHMMMMHMTFFWGKNTEVLFSGWPGTSSGMYALCLIVIFLLAVIAEWLAHSPILRVSGSTNRAAGLAQTAVYTLKTGLSYLVMLAVMSFNAGVFIVAIAGYGVGFFLFGSTTFKKPSDDQKTAELLPPSSGCVC.

Positions 1–20 (MDHDHMHDMPPPSPSSSSMS) are disordered. Helical transmembrane passes span 53-73 (GMYA…EWLA) and 104-124 (YLVM…AIAG).

It belongs to the copper transporter (Ctr) (TC 1.A.56) family. SLC31A subfamily. Highly expressed in leaves and at lower levels in roots, stems and flowers.

It is found in the membrane. Involved in the transport of copper. The sequence is that of Copper transporter 2 (COPT2) from Arabidopsis thaliana (Mouse-ear cress).